The primary structure comprises 490 residues: Bifunctional pantoate ligase/cytidylate kinase (490 aa).

1–8 provides a ligand contact to ATP; sequence MGGLHQGH. Residues 1–253 are pantoate--beta-alanine ligase; the sequence is MGGLHQGHAR…CGETRLIDHV (253 aa). His-8 functions as the Proton donor in the catalytic mechanism. Gln-35 contacts (R)-pantoate. Gln-35 is a beta-alanine binding site. 124 to 127 contacts ATP; the sequence is GEKD. Gln-130 contributes to the (R)-pantoate binding site. ATP is bound by residues Val-153 and 161–164; that span reads ASSR. Residues 254 to 490 form a cytidylate kinase region; sequence FIMTRSPIVA…AKEIWPTPQG (237 aa).

It in the N-terminal section; belongs to the pantothenate synthetase family. In the C-terminal section; belongs to the cytidylate kinase family. Type 1 subfamily.

The protein localises to the cytoplasm. The enzyme catalyses (R)-pantoate + beta-alanine + ATP = (R)-pantothenate + AMP + diphosphate + H(+). It carries out the reaction CMP + ATP = CDP + ADP. The catalysed reaction is dCMP + ATP = dCDP + ADP. The protein operates within cofactor biosynthesis; (R)-pantothenate biosynthesis; (R)-pantothenate from (R)-pantoate and beta-alanine: step 1/1. Functionally, catalyzes the condensation of pantoate with beta-alanine in an ATP-dependent reaction via a pantoyl-adenylate intermediate. Catalyzes the transfer of a phosphate group from ATP to either CMP or dCMP to form CDP or dCDP and ADP, respectively. In Synechococcus sp. (strain WH7803), this protein is Bifunctional pantoate ligase/cytidylate kinase.